The following is a 92-amino-acid chain: Small ribosomal subunit protein uS19 (92 aa).

Belongs to the universal ribosomal protein uS19 family.

Its function is as follows. Protein S19 forms a complex with S13 that binds strongly to the 16S ribosomal RNA. The protein is Small ribosomal subunit protein uS19 of Shewanella putrefaciens (strain CN-32 / ATCC BAA-453).